Here is a 309-residue protein sequence, read N- to C-terminus: Probable non-structural 36.3 kDa protein (309 aa).

The chain is Probable non-structural 36.3 kDa protein (S6) from Avena sativa (Oat).